Consider the following 163-residue polypeptide: NADH-quinone oxidoreductase subunit 9 (163 aa).

2 consecutive 4Fe-4S ferredoxin-type domains span residues 54–84 (LRRYPNGEERCIACKLCEAVCPAQAITIDAE) and 94–123 (TRYDIDMTKCIYCGFCQEACPVDAIVEGPN). Positions 64, 67, 70, 74, 103, 106, 109, and 113 each coordinate [4Fe-4S] cluster.

The protein belongs to the complex I 23 kDa subunit family. In terms of assembly, NDH-1 is composed of at least 14 different subunits, Nqo1 to Nqo14. The complex has a L-shaped structure, with the hydrophobic arm (subunits Nqo7, Nqo8, Nqo10 to Nqo14) embedded in the inner membrane and the hydrophilic peripheral arm (subunits Nqo1 to Nqo6, Nqo9) protruding into the bacterial cytoplasm. The hydrophilic domain contains all the redox centers. The cofactor is [4Fe-4S] cluster.

The protein localises to the cell inner membrane. The enzyme catalyses a quinone + NADH + 5 H(+)(in) = a quinol + NAD(+) + 4 H(+)(out). Its function is as follows. NDH-1 shuttles electrons from NADH, via FMN and iron-sulfur (Fe-S) centers, to quinones in the respiratory chain. The immediate electron acceptor for the enzyme in this species is believed to be ubiquinone. Couples the redox reaction to proton translocation (for every two electrons transferred, four hydrogen ions are translocated across the cytoplasmic membrane), and thus conserves the redox energy in a proton gradient. This is NADH-quinone oxidoreductase subunit 9 from Paracoccus denitrificans.